The sequence spans 87 residues: UPF0250 protein YbeD (87 aa).

This sequence belongs to the UPF0250 family.

The protein is UPF0250 protein YbeD of Shigella boydii serotype 18 (strain CDC 3083-94 / BS512).